A 647-amino-acid chain; its full sequence is Putative pre-mRNA-splicing factor ATP-dependent RNA helicase C20H4.09 (647 aa).

In terms of domain architecture, Helicase ATP-binding spans 35 to 199; it reads LYAVEQNQIT…FGQDKVCTMS (165 aa). 48 to 55 is a binding site for ATP; that stretch reads GHTGCGKT. A DEAH box motif is present at residues 146-149; the sequence is DEVH. Residues 219-398 form the Helicase C-terminal domain; that stretch reads YVDSAIETVI…PLVLFLKGLG (180 aa).

The protein belongs to the DEAD box helicase family. DEAH subfamily.

The protein resides in the nucleus. The enzyme catalyses ATP + H2O = ADP + phosphate + H(+). Functionally, pre-mRNA processing factor involved in disassembly of spliceosomes after the release of mature mRNA. This is Putative pre-mRNA-splicing factor ATP-dependent RNA helicase C20H4.09 from Schizosaccharomyces pombe (strain 972 / ATCC 24843) (Fission yeast).